Reading from the N-terminus, the 1410-residue chain is Slit homolog 1 protein (1410 aa).

A signal peptide spans 1–16 (MLICFIFILLIPESAT). Residues 17–43 (CPAECVCVDRTVSCVGQQLTEVPQNIP) form the LRRNT 1 domain. 20 LRR repeats span residues 22-42 (VCVD…PQNI), 43-66 (PNDT…DFSS), 67-90 (LMNL…SFSS), 91-114 (LVFL…VFQN), 116-138 (LKLT…QLQG), 140-162 (EFLE…VISS), 163-186 (WVSL…SNAR), 219-242 (TVCA…FMTC), 286-309 (PPST…SFKN), 310-333 (LKNL…AFLG), 335-357 (HNLH…TFEG), 358-381 (LGSL…TFDH), 383-405 (PKLS…TFQN), 407-430 (TSLS…WLAQ), 442-465 (ARCE…KFKC), 489-510 (CDCY…PTSI), 511-535 (PRFA…NIHV), 536-559 (LENL…SFEK), 561-583 (SKLR…VLDE), and 585-607 (SNLE…FFNK). The region spanning 195–243 (NPWNCDCRLRWMRKWLEKAEGQNKTVCATPLNLQGSSIEILQDKFMTCS) is the LRRCT 1 domain. Positions 259–286 (ICPLPCTCTGTTVDCRDSGLTYVPTNLP) constitute an LRRNT 2 domain. An LRRCT 2 domain is found at 417–466 (NPLICDCNLQWLAQINLQKNIETSGARCEQPKRLRKKKFATLPPNKFKCK). The LRRNT 3 domain occupies 484–511 (ICPTQCDCYGTTVDCNKRGLNTIPTSIP). Positions 619–671 (NDLLCDCRILPLMSWLRSNSSHSIDIPPCQQFQYSDNESDKQRCAAFPEETCS) constitute an LRRCT 3 domain. The LRRNT 4 domain occupies 677–703 (CPPKCSCLDRVVRCSNKNLTSFPSRIP). LRR repeat units follow at residues 681–703 (CSCL…SRIP), 704–726 (FDTT…DLNR), 727–750 (LYSL…TFSN), 752–774 (TRLS…AFNG), 775–798 (LNAL…AFSN), and 800–823 (TSIT…WFSK). The LRRCT 4 domain maps to 810–859 (NSLYCDCNMAWFSKWIKSKFIEAGIARCEYPNTVSNQLLLTAQPYQFTCD). EGF-like domains are found at residues 871–906 (DLCL…VHCE) and 908–945 (QIDA…DYCE). 18 disulfides stabilise this stretch: C873–C884, C878–C894, C896–C905, C912–C923, C917–C933, C935–C944, C951–C962, C956–C971, C973–C982, C989–C1002, C996–C1011, C1013–C1022, C1029–C1040, C1034–C1049, C1051–C1060, C1076–C1086, C1081–C1097, and C1099–C1108. The EGF-like 1; calcium-binding domain occupies 947–983 (NIDDCVNSKCENGGKCVDLINSYRCDCPMEYEGKHCE). The EGF-like 3 domain maps to 985-1023 (KLEYCTKKLNPCENNGKCIPINGSYSCMCSPGFTGNNCE). The region spanning 1025–1061 (NIDDCKNVECQNGGSCVDGILSYDCLCRPGYAGQYCE) is the EGF-like 2; calcium-binding domain. The region spanning 1072–1109 (KTDACQQSACGQGECVASQNSSDFTCKCHEGFSGPSCD) is the EGF-like 4 domain. Residues 1112–1285 (MSVGFKNPGA…LENVNTEQSC (174 aa)) enclose the Laminin G-like domain. An LRR 27 repeat occupies 1197 to 1221 (TSERKCFLQIDKNPVQIVENSGKSD). Intrachain disulfides connect C1259–C1285, C1292–C1302, C1297–C1314, C1316–C1325, C1332–C1368, C1346–C1382, C1357–C1398, and C1361–C1400. In terms of domain architecture, EGF-like 5 spans 1288 to 1326 (TVNFCAGIDCGNGKCTNNALSPKGYMCQCDSHFSGEHCD). The 75-residue stretch at 1332 to 1406 (CDKQKFRRHH…QCQCEPTKSV (75 aa)) folds into the CTCK domain.

Interacts with eva-1.

It is found in the secreted. Its function is as follows. Functions as a ligand for sax-3 receptor during larval development. Acts via the sax-3/Robo receptor to direct ventral axon guidance and guidance at the midline during embryonic development. In Caenorhabditis elegans, this protein is Slit homolog 1 protein (slt-1).